A 588-amino-acid polypeptide reads, in one-letter code: Myc box-dependent-interacting protein 1 (588 aa).

Position 2 is an N-acetylalanine (alanine 2). An interaction with BIN2 region spans residues 2–122 (AEMGSKGVTA…DYHQKLVDQA (121 aa)). Coiled-coil stretches lie at residues 15–42 (ASNV…TKDE) and 193–274 (HLVA…EKQH). In terms of domain architecture, BAR spans 29 to 276 (VLQKLGKADE…LVSLEKQHGS (248 aa)). The interval 279–355 (FTVKAQPSDS…PKHTPSKEMK (77 aa)) is disordered. Phosphoserine is present on residues serine 296, serine 298, and serine 304. The residue at position 308 (threonine 308) is a Phosphothreonine. Residues serine 324 and serine 332 each carry the phosphoserine modification. Residues 379-422 (FEAPGPFSEQASLLDLDFEPLPPVASPVKAPTPSGQSIPWDLWE) are clathrin-binding. The segment at 448–483 (PSQTAEPGPAQPAEASEVVGGTQEPGETAASEATSS) is disordered. Over residues 474 to 483 (ETAASEATSS) the composition is skewed to low complexity. Residues 515-588 (GFMFKVQAQH…FPENFTERVQ (74 aa)) form the SH3 domain.

As to quaternary structure, heterodimer with AMPH. Binds SH3GLB1. Interacts (via SH3 domain) with DNM1. Interacts with SYNJ1. Interacts (via SH3 domain) with DNM2. Interacts with CLTC. Interacts with AP2A2. Interacts with AP2B1. Interacts with MYC (via N-terminal transactivation domain); the interaction requires the integrity of the conserved MYC box regions 1 and 2. Interacts with BIN2. Interacts with SNX4. Interacts (via BAR domain) with BACE1. Binds (via BAR domain) F-actin. Post-translationally, phosphorylated by protein kinase C. As to expression, highly expressed in the brain and muscle. Isoform AMPH2-1 is expressed only in the brain where it is concentrated in axon initial segments and nodes of Ranvier. Isoform AMPH2-2 is widely expressed.

Its subcellular location is the nucleus. The protein localises to the cytoplasm. It is found in the endosome. The protein resides in the cell membrane. It localises to the sarcolemma. Its subcellular location is the T-tubule. Is a key player in the control of plasma membrane curvature, and membrane shaping and remodeling. Required in muscle cells for the formation of T-tubules, tubular invaginations of the plasma membrane that function in depolarization-contraction coupling. Required in muscle cells for the formation of T-tubules, tubular invaginations of the plasma membrane that function in depolarization-contraction coupling. Is a negative regulator of endocytosis. Is also involved in the regulation of intracellular vesicles sorting, modulation of BACE1 trafficking and the control of amyloid-beta production. In neuronal circuits, endocytosis regulation may influence the internalization of PHF-tau aggregates. May be involved in the regulation of MYC activity and the control cell proliferation. In Rattus norvegicus (Rat), this protein is Myc box-dependent-interacting protein 1 (Bin1).